Here is a 205-residue protein sequence, read N- to C-terminus: Small ribosomal subunit protein uS4 (205 aa).

The S4 RNA-binding domain occupies 95–156 (SRLDNIVYRM…KTIKIPIVKA (62 aa)).

It belongs to the universal ribosomal protein uS4 family. As to quaternary structure, part of the 30S ribosomal subunit. Contacts protein S5. The interaction surface between S4 and S5 is involved in control of translational fidelity.

One of the primary rRNA binding proteins, it binds directly to 16S rRNA where it nucleates assembly of the body of the 30S subunit. Its function is as follows. With S5 and S12 plays an important role in translational accuracy. This chain is Small ribosomal subunit protein uS4, found in Mycoplasma pneumoniae (strain ATCC 29342 / M129 / Subtype 1) (Mycoplasmoides pneumoniae).